Consider the following 303-residue polypeptide: Taste receptor type 2 member 13 (303 aa).

Residues 1–7 (MKSALPS) lie on the Extracellular side of the membrane. Residues 8–28 (IFTLVIIAEFIIGNLSNGFIV) traverse the membrane as a helical segment. Residues 29 to 55 (LINCIDWVSKRELSSVDKLLIILAISR) lie on the Cytoplasmic side of the membrane. A helical transmembrane segment spans residues 56 to 76 (IGLIWEILVSWFLALHYLAIF). Topologically, residues 77-85 (VSGTGLRIM) are extracellular. A helical membrane pass occupies residues 86-106 (IFSWIVSNHFNLWLATILSIF). Residues 107-128 (YLLKIASFSSPAFLYLKWRVNK) are Cytoplasmic-facing. The helical transmembrane segment at 129–149 (VILLILLGTLVFLFLNLIQIN) threads the bilayer. Over 150-184 (MHIKDWLDRYERNTTWNFSMSDFETFSVSVKFTMT) the chain is Extracellular. Residues Asn162 and Asn166 are each glycosylated (N-linked (GlcNAc...) asparagine). The helical transmembrane segment at 185 to 205 (MFSLTPFTVAFISFLLLIFSL) threads the bilayer. Residues 206 to 232 (QKHLQKMQLNYKGHRDPKTKVHTNALK) are Cytoplasmic-facing. The helical transmembrane segment at 233–253 (IVISFLLFYASFFLCVLXSWI) threads the bilayer. Residues 254–261 (SELYQNTV) are Extracellular-facing. The helical transmembrane segment at 262-282 (IYMLCETIGVFYPSSHSFLLI) threads the bilayer. The Cytoplasmic segment spans residues 283 to 303 (LGNAKLRQAFLLVAAKVWAKR).

Belongs to the G-protein coupled receptor T2R family.

The protein localises to the membrane. Its function is as follows. Receptor that may play a role in the perception of bitterness and is gustducin-linked. May play a role in sensing the chemical composition of the gastrointestinal content. The activity of this receptor may stimulate alpha gustducin, mediate PLC-beta-2 activation and lead to the gating of TRPM5. In Gorilla gorilla gorilla (Western lowland gorilla), this protein is Taste receptor type 2 member 13 (TAS2R13).